The chain runs to 82 residues: Small ribosomal subunit protein bS18 (82 aa).

The protein belongs to the bacterial ribosomal protein bS18 family. In terms of assembly, part of the 30S ribosomal subunit. Forms a tight heterodimer with protein bS6.

Its function is as follows. Binds as a heterodimer with protein bS6 to the central domain of the 16S rRNA, where it helps stabilize the platform of the 30S subunit. In Bartonella bacilliformis (strain ATCC 35685 / KC583 / Herrer 020/F12,63), this protein is Small ribosomal subunit protein bS18.